A 196-amino-acid chain; its full sequence is Phosphoheptose isomerase (196 aa).

Residues 35 to 194 (LTACLRCGGK…EKELFTPSGQ (160 aa)) enclose the SIS domain. 50–52 (NGG) is a binding site for substrate. Zn(2+) is bound by residues His59 and Glu63. Residues Glu63, 92 to 93 (ND), 118 to 120 (STS), Ser123, and Gln170 contribute to the substrate site. Residues Gln170 and His178 each contribute to the Zn(2+) site.

The protein belongs to the SIS family. GmhA subfamily. As to quaternary structure, homotetramer. The cofactor is Zn(2+).

The protein resides in the cytoplasm. The catalysed reaction is 2 D-sedoheptulose 7-phosphate = D-glycero-alpha-D-manno-heptose 7-phosphate + D-glycero-beta-D-manno-heptose 7-phosphate. It participates in carbohydrate biosynthesis; D-glycero-D-manno-heptose 7-phosphate biosynthesis; D-glycero-alpha-D-manno-heptose 7-phosphate and D-glycero-beta-D-manno-heptose 7-phosphate from sedoheptulose 7-phosphate: step 1/1. Functionally, catalyzes the isomerization of sedoheptulose 7-phosphate in D-glycero-D-manno-heptose 7-phosphate. This Syntrophotalea carbinolica (strain DSM 2380 / NBRC 103641 / GraBd1) (Pelobacter carbinolicus) protein is Phosphoheptose isomerase.